Here is a 638-residue protein sequence, read N- to C-terminus: DNA gyrase subunit B (638 aa).

The 115-residue stretch at C423–P537 folds into the Toprim domain. E429, D502, and D504 together coordinate Mg(2+).

Belongs to the type II topoisomerase GyrB family. As to quaternary structure, heterotetramer, composed of two GyrA and two GyrB chains. In the heterotetramer, GyrA contains the active site tyrosine that forms a transient covalent intermediate with DNA, while GyrB binds cofactors and catalyzes ATP hydrolysis. The cofactor is Mg(2+). Requires Mn(2+) as cofactor. It depends on Ca(2+) as a cofactor.

Its subcellular location is the cytoplasm. It catalyses the reaction ATP-dependent breakage, passage and rejoining of double-stranded DNA.. A type II topoisomerase that negatively supercoils closed circular double-stranded (ds) DNA in an ATP-dependent manner to modulate DNA topology and maintain chromosomes in an underwound state. Negative supercoiling favors strand separation, and DNA replication, transcription, recombination and repair, all of which involve strand separation. Also able to catalyze the interconversion of other topological isomers of dsDNA rings, including catenanes and knotted rings. Type II topoisomerases break and join 2 DNA strands simultaneously in an ATP-dependent manner. In Treponema denticola (strain ATCC 35405 / DSM 14222 / CIP 103919 / JCM 8153 / KCTC 15104), this protein is DNA gyrase subunit B.